The following is a 154-amino-acid chain: Superoxide dismutase [Cu-Zn] (154 aa).

Cu cation contacts are provided by His-47, His-49, and His-64. Residues Cys-58 and Cys-147 are joined by a disulfide bond. His-64, His-72, His-81, and Asp-84 together coordinate Zn(2+). Position 121 (His-121) interacts with Cu cation. The span at 126 to 137 shows a compositional bias: basic and acidic residues; sequence DLGRGGNEESKK. The interval 126 to 147 is disordered; sequence DLGRGGNEESKKTGNAGPRPAC.

It belongs to the Cu-Zn superoxide dismutase family. Homodimer. Requires Cu cation as cofactor. Zn(2+) is required as a cofactor.

The protein localises to the cytoplasm. The catalysed reaction is 2 superoxide + 2 H(+) = H2O2 + O2. In terms of biological role, destroys radicals which are normally produced within the cells and which are toxic to biological systems. Plays an important role in the phase transition, and may be important in vivo, as it would facilitate the intracellular survival of the fungus by providing a non-toxic environment in the macrophage phagolysosomes. The sequence is that of Superoxide dismutase [Cu-Zn] from Talaromyces marneffei (Penicillium marneffei).